A 166-amino-acid chain; its full sequence is NAD(P)H-quinone oxidoreductase subunit I, chloroplastic (166 aa).

4Fe-4S ferredoxin-type domains are found at residues 55-84 (GRIHFEFDKCIACEVCVRVCPIDLPVVDWK) and 95-124 (LNYSIDFGICIFCGNCVEYCPTNCLSMTEE). Residues Cys64, Cys67, Cys70, Cys74, Cys104, Cys107, Cys110, and Cys114 each coordinate [4Fe-4S] cluster.

The protein belongs to the complex I 23 kDa subunit family. NDH is composed of at least 16 different subunits, 5 of which are encoded in the nucleus. It depends on [4Fe-4S] cluster as a cofactor.

It is found in the plastid. It localises to the chloroplast thylakoid membrane. The catalysed reaction is a plastoquinone + NADH + (n+1) H(+)(in) = a plastoquinol + NAD(+) + n H(+)(out). It catalyses the reaction a plastoquinone + NADPH + (n+1) H(+)(in) = a plastoquinol + NADP(+) + n H(+)(out). Its function is as follows. NDH shuttles electrons from NAD(P)H:plastoquinone, via FMN and iron-sulfur (Fe-S) centers, to quinones in the photosynthetic chain and possibly in a chloroplast respiratory chain. The immediate electron acceptor for the enzyme in this species is believed to be plastoquinone. Couples the redox reaction to proton translocation, and thus conserves the redox energy in a proton gradient. The polypeptide is NAD(P)H-quinone oxidoreductase subunit I, chloroplastic (Pentanema britannica (British yellowhead)).